The following is a 408-amino-acid chain: MYPMDSDYHRRGLVANDRSPAQFVRLDKPRAVDDLYIGKREKMRRWLCCACHVEEPYHSSENEHLRSPKHHNDFGHHTRKPQAAVKPDALKEPPSIDVPALSLDELKEKTDNFGSKSLIGEGSYGRAYYATLKDGKAVAVKKLDNAAEPESNVEFLTQVSRVSKLKHDNFVELFGYCVEGNFRILAYEFATMGSLHDILHGRKGVQGAQPGPTLDWIQRVRIAVDAARGLEYLHEKVQPAVIHRDIRSSNVLLFEDFKAKIADFNLSNQSPDMAARLHSTRVLGTFGYHAPEYAMTGQLTQKSDVYSFGVVLLELLTGRKPVDHTMPRGQQSLVTWATPRLSEDKVKQCVDPKLKGEYPPKAVAKLAAVAALCVQYESEFRPNMSIVVKALQPLLRSSTAAAVPVQEA.

Residues 59 to 76 show a composition bias toward basic and acidic residues; it reads SSENEHLRSPKHHNDFGH. The disordered stretch occupies residues 59–91; sequence SSENEHLRSPKHHNDFGHHTRKPQAAVKPDALK. A Protein kinase domain is found at 113 to 395; sequence FGSKSLIGEG…IVVKALQPLL (283 aa). Residues 119-127 and K141 contribute to the ATP site; that span reads IGEGSYGRA. D245 functions as the Proton acceptor in the catalytic mechanism.

Belongs to the protein kinase superfamily. Tyr protein kinase family. As to quaternary structure, interacts with OXI1. Post-translationally, phosphorylated by OXI1.

It localises to the cell membrane. The catalysed reaction is L-tyrosyl-[protein] + ATP = O-phospho-L-tyrosyl-[protein] + ADP + H(+). The sequence is that of PTI1-like tyrosine-protein kinase 3 (PTI13) from Arabidopsis thaliana (Mouse-ear cress).